Here is a 133-residue protein sequence, read N- to C-terminus: ATP synthase epsilon chain, chloroplastic (133 aa).

This sequence belongs to the ATPase epsilon chain family. F-type ATPases have 2 components, CF(1) - the catalytic core - and CF(0) - the membrane proton channel. CF(1) has five subunits: alpha(3), beta(3), gamma(1), delta(1), epsilon(1). CF(0) has three main subunits: a, b and c.

It localises to the plastid. Its subcellular location is the chloroplast thylakoid membrane. Functionally, produces ATP from ADP in the presence of a proton gradient across the membrane. This is ATP synthase epsilon chain, chloroplastic from Atropa belladonna (Belladonna).